Here is a 383-residue protein sequence, read N- to C-terminus: MVIDPVTLSQELISFPSITPTDNGAISFLSDILSQYGFTCHILDFGDDTVTVRNLYAYRGTEEGPNLCFAGHTDVVKTGDLTKWKFDPFSGHIEDDILYGRGAVDMKSAICAFIAAVSRINFNEVPGSISFLISGDEEGDHFQYGTPSVLKWLNENNHKIDYCIIGEPTSKSFLGDTIKVGRRGSVHFKIICNGIQGHVAYPHFAENPIDNMVSILYKICNTTFDTGNEYFQPSNCEIVSVDTGNTSRNVIPDTIVAHINIRYNNIHTAESLFDIINNICAQVTPKYQLLHSVSGEPFFNQPNQYSDMLSSAIKKVTGQDAIASTSGGVSDSRFIKNVCPVIEFGLKNETAHKIDEHVPVKEIYQLADIYTEFIKQFFNLSTT.

H72 is a Zn(2+) binding site. D74 is an active-site residue. Residue D105 participates in Zn(2+) binding. E137 acts as the Proton acceptor in catalysis. Positions 138, 167, and 352 each coordinate Zn(2+).

This sequence belongs to the peptidase M20A family. DapE subfamily. In terms of assembly, homodimer. Zn(2+) serves as cofactor. Requires Co(2+) as cofactor.

It catalyses the reaction N-succinyl-(2S,6S)-2,6-diaminopimelate + H2O = (2S,6S)-2,6-diaminopimelate + succinate. It functions in the pathway amino-acid biosynthesis; L-lysine biosynthesis via DAP pathway; LL-2,6-diaminopimelate from (S)-tetrahydrodipicolinate (succinylase route): step 3/3. Catalyzes the hydrolysis of N-succinyl-L,L-diaminopimelic acid (SDAP), forming succinate and LL-2,6-diaminopimelate (DAP), an intermediate involved in the bacterial biosynthesis of lysine and meso-diaminopimelic acid, an essential component of bacterial cell walls. In Ehrlichia ruminantium (strain Gardel), this protein is Succinyl-diaminopimelate desuccinylase.